Reading from the N-terminus, the 152-residue chain is TOMM20-like protein 1 (152 aa).

Residues 1–6 lie on the Mitochondrial intermembrane side of the membrane; it reads MPSVRL. The helical transmembrane segment at 7–27 threads the bilayer; that stretch reads GVGLLAGLAAGGAVVLLSYCV. Residues 28–152 lie on the Cytoplasmic side of the membrane; sequence YLDWRRHRDP…STEHLKDDPD (125 aa).

This sequence belongs to the Tom20 family.

The protein resides in the mitochondrion outer membrane. The protein is TOMM20-like protein 1 (Tomm20l) of Mus musculus (Mouse).